Reading from the N-terminus, the 282-residue chain is 3-methyl-2-oxobutanoate hydroxymethyltransferase (282 aa).

Positions 44 and 83 each coordinate Mg(2+). Residues 44-45 (DS), Asp-83, and Lys-112 contribute to the 3-methyl-2-oxobutanoate site. A Mg(2+)-binding site is contributed by Glu-114. Glu-181 serves as the catalytic Proton acceptor.

It belongs to the PanB family. Homodecamer; pentamer of dimers. The cofactor is Mg(2+).

The protein localises to the cytoplasm. The enzyme catalyses 3-methyl-2-oxobutanoate + (6R)-5,10-methylene-5,6,7,8-tetrahydrofolate + H2O = 2-dehydropantoate + (6S)-5,6,7,8-tetrahydrofolate. It functions in the pathway cofactor biosynthesis; coenzyme A biosynthesis. Catalyzes the reversible reaction in which hydroxymethyl group from 5,10-methylenetetrahydrofolate is transferred onto alpha-ketoisovalerate to form ketopantoate. This chain is 3-methyl-2-oxobutanoate hydroxymethyltransferase, found in Pyrococcus abyssi (strain GE5 / Orsay).